A 500-amino-acid polypeptide reads, in one-letter code: Tyrosine decarboxylase 2 (500 aa).

Repeat copies occupy residues 65–122 (EDIR…TELE) and 125–176 (VLDW…GKRS). Positions 65–176 (EDIRQKIVPG…KFLNRFGKRS (112 aa)) are 2 X approximate tandem repeats. Serine 89 provides a ligand contact to substrate. Positions 153 and 154 each coordinate pyridoxal 5'-phosphate. Position 189 (histidine 189) interacts with substrate. Pyridoxal 5'-phosphate is bound by residues threonine 248 and asparagine 302. At lysine 305 the chain carries N6-(pyridoxal phosphate)lysine.

Belongs to the group II decarboxylase family. Requires pyridoxal 5'-phosphate as cofactor. As to expression, mostly expressed in bulbs, and, to a lower extent, in stems, roots, leaves and flowers.

The catalysed reaction is L-tyrosine + H(+) = tyramine + CO2. It participates in alkaloid biosynthesis. Catalyzes the decarboxylation of L-tyrosine to tyramine, which is converted to norbelladine, a precursor to all Amaryllidaceae alkaloids such as galanthamine, lycorine and haemanthamine, and including haemanthamine- and crinamine-type alkaloids, promising anticancer agents. The chain is Tyrosine decarboxylase 2 from Narcissus pseudonarcissus (Daffodil).